Reading from the N-terminus, the 498-residue chain is Lysine--tRNA ligase (498 aa).

The Mg(2+) site is built by E408 and E415.

Belongs to the class-II aminoacyl-tRNA synthetase family. As to quaternary structure, homodimer. The cofactor is Mg(2+).

The protein localises to the cytoplasm. The catalysed reaction is tRNA(Lys) + L-lysine + ATP = L-lysyl-tRNA(Lys) + AMP + diphosphate. The protein is Lysine--tRNA ligase of Listeria welshimeri serovar 6b (strain ATCC 35897 / DSM 20650 / CCUG 15529 / CIP 8149 / NCTC 11857 / SLCC 5334 / V8).